Reading from the N-terminus, the 229-residue chain is Small ribosomal subunit protein uS3 (229 aa).

In terms of domain architecture, KH type-2 spans 18–87 (IDEYLAKQYY…NPQITITNVE (70 aa)).

The protein belongs to the universal ribosomal protein uS3 family. As to quaternary structure, part of the 30S ribosomal subunit.

Functionally, binds the lower part of the 30S subunit head. The polypeptide is Small ribosomal subunit protein uS3 (Saccharolobus solfataricus (strain ATCC 35092 / DSM 1617 / JCM 11322 / P2) (Sulfolobus solfataricus)).